Reading from the N-terminus, the 136-residue chain is Small ribosomal subunit protein bS16 (136 aa).

Basic residues predominate over residues threonine 114–lysine 123. Residues threonine 114–glycine 136 are disordered.

Belongs to the bacterial ribosomal protein bS16 family.

The sequence is that of Small ribosomal subunit protein bS16 from Chlorobium chlorochromatii (strain CaD3).